Reading from the N-terminus, the 341-residue chain is Anthranilate phosphoribosyltransferase (341 aa).

Residues Gly-81, Gly-84–Asp-85, Asn-91–Thr-94, Lys-109–Ser-117, and Ser-121 each bind 5-phospho-alpha-D-ribose 1-diphosphate. Gly-81 contacts anthranilate. Position 93 (Ser-93) interacts with Mg(2+). Asn-112 is an anthranilate binding site. Arg-167 serves as a coordination point for anthranilate. Positions 226 and 227 each coordinate Mg(2+).

Belongs to the anthranilate phosphoribosyltransferase family. In terms of assembly, homodimer. Mg(2+) serves as cofactor.

It catalyses the reaction N-(5-phospho-beta-D-ribosyl)anthranilate + diphosphate = 5-phospho-alpha-D-ribose 1-diphosphate + anthranilate. It functions in the pathway amino-acid biosynthesis; L-tryptophan biosynthesis; L-tryptophan from chorismate: step 2/5. In terms of biological role, catalyzes the transfer of the phosphoribosyl group of 5-phosphorylribose-1-pyrophosphate (PRPP) to anthranilate to yield N-(5'-phosphoribosyl)-anthranilate (PRA). The chain is Anthranilate phosphoribosyltransferase from Saccharophagus degradans (strain 2-40 / ATCC 43961 / DSM 17024).